Here is a 329-residue protein sequence, read N- to C-terminus: Cathepsin K (329 aa).

The N-terminal stretch at 1-15 is a signal peptide; the sequence is MWVFKFLLLPMVSFA. Positions 16–114 are cleaved as a propeptide — activation peptide; that stretch reads LSPEEMLDTQ…TLYTPEWEGR (99 aa). The N-linked (GlcNAc...) asparagine glycan is linked to Asn103. Intrachain disulfides connect Cys136-Cys177 and Cys170-Cys210. Cys139 is an active-site residue. Asn213 carries an N-linked (GlcNAc...) asparagine glycan. Cys269 and Cys318 are oxidised to a cystine. Catalysis depends on residues His276 and Asn296.

Belongs to the peptidase C1 family. In terms of tissue distribution, predominantly expressed in bones. Expressed in thyroid epithelial cells.

It is found in the lysosome. Its subcellular location is the secreted. The protein localises to the apical cell membrane. The catalysed reaction is Broad proteolytic activity. With small-molecule substrates and inhibitors, the major determinant of specificity is P2, which is preferably Leu, Met &gt; Phe, and not Arg.. Functionally, thiol protease involved in osteoclastic bone resorption. Displays potent endoprotease activity against fibrinogen at acid pH. May play an important role in extracellular matrix degradation. Involved in the release of thyroid hormone thyroxine (T4) by limited proteolysis of TG/thyroglobulin in the thyroid follicle lumen. This chain is Cathepsin K (Ctsk), found in Mus musculus (Mouse).